The primary structure comprises 334 residues: Methylthioribose-1-phosphate isomerase (334 aa).

Substrate-binding positions include 44–46, R87, and Q192; that span reads RGA. D233 acts as the Proton donor in catalysis. Residue 243–244 coordinates substrate; sequence NK.

It belongs to the eIF-2B alpha/beta/delta subunits family. MtnA subfamily.

The catalysed reaction is 5-(methylsulfanyl)-alpha-D-ribose 1-phosphate = 5-(methylsulfanyl)-D-ribulose 1-phosphate. Its pathway is amino-acid biosynthesis; L-methionine biosynthesis via salvage pathway; L-methionine from S-methyl-5-thio-alpha-D-ribose 1-phosphate: step 1/6. Catalyzes the interconversion of methylthioribose-1-phosphate (MTR-1-P) into methylthioribulose-1-phosphate (MTRu-1-P). This is Methylthioribose-1-phosphate isomerase from Dehalococcoides mccartyi (strain ATCC BAA-2266 / KCTC 15142 / 195) (Dehalococcoides ethenogenes (strain 195)).